The primary structure comprises 198 residues: Snake venom metalloproteinase neuwiedase (198 aa).

Positions 8–198 constitute a Peptidase M12B domain; the sequence is RYIELVIVAD…QTFLTNHNPQ (191 aa). Ca(2+)-binding residues include Glu11 and Asp95. His144 serves as a coordination point for Zn(2+). Glu145 is an active-site residue. His148 and His154 together coordinate Zn(2+). Disulfide bonds link Cys159-Cys183 and Cys161-Cys166.

It belongs to the venom metalloproteinase (M12B) family. P-I subfamily. Zn(2+) serves as cofactor. In terms of tissue distribution, expressed by the venom gland.

The protein resides in the secreted. With respect to regulation, inhibited by EDTA, EGTA and 1,10-phenanthroline, partially inhibited by beta-mercaptoethanol and not inhibited by serine protease inhibitors (leupeptin and aprotinin). Also inhibited by an excess of zinc, mercury and magnesium ions. Extracts of the plant Casearia mariquitensis neutralizes the decrease of platelets and plasma fibrinogen induced by the protease. The same extracts also partially inhibit Bbeta chain cleavage, but not Aalpha chain cleavage. Its function is as follows. This metalloprotease hydrolyzes the Aalpha chain of fibrin and fibrinogen first followed by the Bbeta chain and shows no effect on the gamma chain. It is also able to degrade type I collagen, fibronectin, laminin and induces inflammatory reaction. It is devoid of hemorrhagic and thrombotic activities, except in lung where it induces pulmonary bleeding. It also induces a mild myotoxic reaction. It is not able to inhibit platelet aggregation, but it induces decrease of platelets and plasma fibrinogen. It contributes to local tissue damage by inducing edema, inflammatory infiltrate and mild myotoxicity, and by degrading extracellular matrix components. The protein is Snake venom metalloproteinase neuwiedase of Bothrops pauloensis (Neuwied's lancehead).